The sequence spans 1358 residues: Tenascin-R (1358 aa).

Positions 1–31 (MGADGETVVLKNMLIGINLILLGSMIKPSEC) are cleaved as a signal peptide. Residues Thr-36 and Thr-37 are each glycosylated (O-linked (GalNAc...) threonine). Asn-55 is a glycosylation site (N-linked (GlcNAc...) asparagine). A coiled-coil region spans residues 127 to 157 (CASSAQVLQELLSRIEMLEREVSVLRDQCNA). Residue Ser-176 is glycosylated (O-linked (Xyl...) (chondroitin sulfate) serine). N-linked (GlcNAc...) asparagine glycosylation is found at Asn-180 and Asn-198. 3 EGF-like domains span residues 188 to 199 (CICNEGWFGKNC), 219 to 230 (CICDSEYSGDDC), and 250 to 261 (CVCEEPYTGEDC). An O-linked (Xyl...) (chondroitin sulfate) serine glycan is attached at Ser-271. Asn-278 is a glycosylation site (N-linked (GlcNAc...) asparagine). In terms of domain architecture, EGF-like 4 spans 281 to 292 (CLCEEGYVGEDC). Disulfide bonds link Cys-292-Cys-301, Cys-297-Cys-312, and Cys-314-Cys-323. Ser-302 is a glycosylation site (O-linked (Xyl...) (chondroitin sulfate) serine). The EGF-like 5 domain occupies 312–323 (CVCEEGYQGPDC). 9 consecutive Fibronectin type-III domains span residues 328–420 (PPED…TPQG), 421–505 (LQFK…TVID), 506–595 (GPTQ…TEID), 596–687 (APKN…TELD), 688–777 (SPRD…FRPI), 778–865 (SHLH…TGID), 866–955 (PPKD…AMDN), 956–1042 (PVDL…TLLD), and 1043–1130 (PPAN…TGGR). N-linked (GlcNAc...) asparagine glycosylation is found at Asn-392, Asn-470, and Asn-581. At Ser-724 the chain carries Phosphoserine. 5 N-linked (GlcNAc...) asparagine glycosylation sites follow: Asn-791, Asn-874, Asn-1036, Asn-1046, and Asn-1261. A Fibrinogen C-terminal domain is found at 1129–1344 (GRVFPHPQDC…FVEMKMRPYN (216 aa)).

It belongs to the tenascin family. As to quaternary structure, forms oligomers. Interacts with CNTN1, TNC, and FN1. Interacts with BCAN and ACAN in a calcium-dependent manner. Interacts with SCN2B, PTPRZ1, and CSPG3. Post-translationally, contains N-linked oligosaccharides, O-linked sialylated structures and O-linked chondroitin sulfate glycosaminoglycans. Contains N-linked oligosaccharides with a sulfated carbohydrate structure. O-glycosylated on Thr-36 or Thr-37 with a core 1 or possibly core 8 glycan. In terms of tissue distribution, brain specific.

The protein localises to the secreted. It localises to the extracellular space. Its subcellular location is the extracellular matrix. Functionally, neural extracellular matrix (ECM) protein involved in interactions with different cells and matrix components. These interactions can influence cellular behavior by either evoking a stable adhesion and differentiation, or repulsion and inhibition of neurite growth. Binding to cell surface gangliosides inhibits RGD-dependent integrin-mediated cell adhesion and results in an inhibition of PTK2/FAK1 (FAK) phosphorylation and cell detachment. Binding to membrane surface sulfatides results in a oligodendrocyte adhesion and differentiation. Interaction with CNTN1 induces a repulsion of neurons and an inhibition of neurite outgrowth. Interacts with SCN2B may play a crucial role in clustering and regulation of activity of sodium channels at nodes of Ranvier. TNR-linked chondroitin sulfate glycosaminoglycans are involved in the interaction with FN1 and mediate inhibition of cell adhesion and neurite outgrowth. The highly regulated addition of sulfated carbohydrate structure may modulate the adhesive properties of TNR over the course of development and during synapse maintenance. The polypeptide is Tenascin-R (TNR) (Homo sapiens (Human)).